We begin with the raw amino-acid sequence, 345 residues long: S-adenosylmethionine:tRNA ribosyltransferase-isomerase (345 aa).

Belongs to the QueA family. Monomer.

The protein localises to the cytoplasm. It catalyses the reaction 7-aminomethyl-7-carbaguanosine(34) in tRNA + S-adenosyl-L-methionine = epoxyqueuosine(34) in tRNA + adenine + L-methionine + 2 H(+). The protein operates within tRNA modification; tRNA-queuosine biosynthesis. Its function is as follows. Transfers and isomerizes the ribose moiety from AdoMet to the 7-aminomethyl group of 7-deazaguanine (preQ1-tRNA) to give epoxyqueuosine (oQ-tRNA). This Anaeromyxobacter sp. (strain Fw109-5) protein is S-adenosylmethionine:tRNA ribosyltransferase-isomerase.